A 145-amino-acid chain; its full sequence is Large ribosomal subunit protein uL13 (145 aa).

It belongs to the universal ribosomal protein uL13 family. Part of the 50S ribosomal subunit.

In terms of biological role, this protein is one of the early assembly proteins of the 50S ribosomal subunit, although it is not seen to bind rRNA by itself. It is important during the early stages of 50S assembly. This chain is Large ribosomal subunit protein uL13, found in Bacillus thuringiensis (strain Al Hakam).